The chain runs to 396 residues: Elongation factor Tu (396 aa).

The 196-residue stretch at 10-205 (KPHVNIGTIG…AVDESIPDPV (196 aa)) folds into the tr-type G domain. The tract at residues 19–26 (GHVDHGKT) is G1. Residue 19–26 (GHVDHGKT) participates in GTP binding. Position 26 (Thr26) interacts with Mg(2+). Positions 62–66 (GITIN) are G2. A G3 region spans residues 83 to 86 (DAPG). Residues 83–87 (DAPGH) and 138–141 (NKAD) contribute to the GTP site. The G4 stretch occupies residues 138 to 141 (NKAD). Positions 175–177 (SAL) are G5.

Belongs to the TRAFAC class translation factor GTPase superfamily. Classic translation factor GTPase family. EF-Tu/EF-1A subfamily. Monomer.

The protein localises to the cytoplasm. The catalysed reaction is GTP + H2O = GDP + phosphate + H(+). Functionally, GTP hydrolase that promotes the GTP-dependent binding of aminoacyl-tRNA to the A-site of ribosomes during protein biosynthesis. In Rhodococcus erythropolis (strain PR4 / NBRC 100887), this protein is Elongation factor Tu.